Consider the following 471-residue polypeptide: MENFKHLPEPFRIRVIEPVKRTTRAYRDEAILKAGMNLFLLDSEDIFIDLLTDSGTGAVTQDMQAAMLRGDEAYSGSRSYYALANAVKEIFGYEYTIPTHQGRGAEQIYIPVLIKKREQEKGLDRNKMVVFSNYFFDTTQGHSQLNGATVRNVYIKEAFDTDVDHDFKGNFDLEKLEQGILEVGANNVPYIVCTITCNSAGGQPVSLANMKAMYQIARKYDIPVIMDSARFAENAYFIQQREAEYKDWTIEQITYESYKYADALAMSAKKDAMVPMGGLLCFKDNSMEDVYNECRTLCVVQEGFPTYGGLEGGAMERLAVGLRDGMRQDWLAYRISQIEYLVQGLEKIGVVCQQPGGHAAFVDAGKLLPHIPAEQFPAQALACELYKVAGIRSVEIGSLLLGRDPKTGQQLPCPAELLRLTIPRATYTQTHMDFIIEAFKRVKENAKNIKGLDFTYEPKVLRHFTARLKEI.

Position 270 is an N6-(pyridoxal phosphate)lysine (Lys270).

The protein belongs to the beta-eliminating lyase family. Homotetramer. Requires pyridoxal 5'-phosphate as cofactor.

The enzyme catalyses L-tryptophan + H2O = indole + pyruvate + NH4(+). The protein operates within amino-acid degradation; L-tryptophan degradation via pyruvate pathway; indole and pyruvate from L-tryptophan: step 1/1. The protein is Tryptophanase of Histophilus somni (strain 129Pt) (Haemophilus somnus).